The following is a 383-amino-acid chain: Trichodiene synthase (383 aa).

This sequence belongs to the trichodiene synthase family.

It catalyses the reaction (2E,6E)-farnesyl diphosphate = trichodiene + diphosphate. Its pathway is sesquiterpene biosynthesis; trichothecene biosynthesis. Its function is as follows. TS is a member of the terpene cyclase group of enzymes. It catalyzes the isomerization and cyclization of farnesyl pyro-phosphate to form trichodiene, the first cyclic intermediate in the biosynthetic pathway for trichothecenes. It serves to branch trichothecene biosynthesis from the isoprenoid pathway. This Gibberella pulicaris protein is Trichodiene synthase (TRI5).